Consider the following 305-residue polypeptide: Protein FdhE homolog (305 aa).

It belongs to the FdhE family.

Its subcellular location is the cytoplasm. Necessary for formate dehydrogenase activity. This is Protein FdhE homolog from Stutzerimonas stutzeri (strain A1501) (Pseudomonas stutzeri).